The primary structure comprises 202 residues: MKALTARQQQVYDLIRDHIEQTGMPPTRAEIAQRLGFRSPNAAEEHLKALQRKGVIEIVSGASRGIRLLMEDETGLPLVGQVAAGEPLLAQQHIEGFYQIDPSLFKPGADFLLRVNGMSMRDIGILDGDLLAVHKTQDVRNGQVVVARIEDEVTVKRLKKQGNMVQLLPENCDFQPIVVDLREQSFTIEGLAVGVIRNGDWI.

Residues 28-48 (RAEIAQRLGFRSPNAAEEHLK) constitute a DNA-binding region (H-T-H motif). Residues Ser119 and Lys156 each act as for autocatalytic cleavage activity in the active site.

It belongs to the peptidase S24 family. As to quaternary structure, homodimer.

The enzyme catalyses Hydrolysis of Ala-|-Gly bond in repressor LexA.. Its function is as follows. Represses a number of genes involved in the response to DNA damage (SOS response), including recA and lexA. Binds to the 16 bp palindromic sequence 5'-CTGTATATATATACAG-3'. In the presence of single-stranded DNA, RecA interacts with LexA causing an autocatalytic cleavage which disrupts the DNA-binding part of LexA, leading to derepression of the SOS regulon and eventually DNA repair. The polypeptide is LexA repressor (Edwardsiella ictaluri (strain 93-146)).